The following is a 55-amino-acid chain: AETLVAAKIVKDVKSGVKVLANGELTAKXLTVKVAKVSAAAKAAIEAAGGSVEEA.

This sequence belongs to the universal ribosomal protein uL15 family. As to quaternary structure, part of the 50S ribosomal subunit.

In terms of biological role, binds to the 23S rRNA. This Lactococcus lactis subsp. cremoris (Streptococcus cremoris) protein is Large ribosomal subunit protein uL15 (rplO).